A 122-amino-acid polypeptide reads, in one-letter code: Large ribosomal subunit protein bL12 (122 aa).

It belongs to the bacterial ribosomal protein bL12 family. In terms of assembly, homodimer. Part of the ribosomal stalk of the 50S ribosomal subunit. Forms a multimeric L10(L12)X complex, where L10 forms an elongated spine to which 2 to 4 L12 dimers bind in a sequential fashion. Binds GTP-bound translation factors.

Forms part of the ribosomal stalk which helps the ribosome interact with GTP-bound translation factors. Is thus essential for accurate translation. The sequence is that of Large ribosomal subunit protein bL12 from Actinobacillus pleuropneumoniae serotype 5b (strain L20).